A 271-amino-acid polypeptide reads, in one-letter code: Malonyl-[acyl-carrier protein] O-methyltransferase (271 aa).

The protein belongs to the methyltransferase superfamily.

The catalysed reaction is malonyl-[ACP] + S-adenosyl-L-methionine = malonyl-[ACP] methyl ester + S-adenosyl-L-homocysteine. The protein operates within cofactor biosynthesis; biotin biosynthesis. In terms of biological role, converts the free carboxyl group of a malonyl-thioester to its methyl ester by transfer of a methyl group from S-adenosyl-L-methionine (SAM). It allows to synthesize pimeloyl-ACP via the fatty acid synthetic pathway. The chain is Malonyl-[acyl-carrier protein] O-methyltransferase from Halalkalibacterium halodurans (strain ATCC BAA-125 / DSM 18197 / FERM 7344 / JCM 9153 / C-125) (Bacillus halodurans).